Here is a 96-residue protein sequence, read N- to C-terminus: 2Fe-2S ferredoxin-5 (96 aa).

Residues 2 to 96 enclose the 2Fe-2S ferredoxin-type domain; the sequence is PKVIVANINA…GKGDVVIYLP (95 aa). [2Fe-2S] cluster-binding residues include Cys-36, Cys-42, Cys-45, and Cys-81.

Belongs to the adrenodoxin/putidaredoxin family. [2Fe-2S] cluster is required as a cofactor.

May be involved in the assembly of iron-sulfur clusters (Isc-Fd). This chain is 2Fe-2S ferredoxin-5 (fdx5), found in Aquifex aeolicus (strain VF5).